A 316-amino-acid chain; its full sequence is Na(+)/H(+) exchange regulatory cofactor NHE-RF2 (316 aa).

Positions 11 to 91 (LCRLVRGEQG…ETRLLVVDKE (81 aa)) constitute a PDZ 1 domain. Residues 109–148 (QRGLPPAHDPWEPKPDWARAGSLSSDAGQKDVNGPPRELR) form a disordered region. Phosphoserine occurs at positions 130, 183, and 254. One can recognise a PDZ 2 domain in the interval 151 to 231 (LCHLRKGPQG…EARLLLVDPE (81 aa)). Residues 244–303 (TEEHVEGPLPSPITNGTSPAQDASAWKRDPFQESGLHLSPTAAEAKEKARATRVNKRAPQ) form a disordered region. Polar residues predominate over residues 255–264 (PITNGTSPAQ). The residue at position 282 (serine 282) is a Phosphoserine.

Homodimer, and heterodimer with NHERF1. Binds ADRB2, SLC9A3, P2RY1, P2YR2, SRY, RDX, PDZK1 and LPAR2. Found in a complex with EZR, PODXL and NHERF2. Interacts (via the PDZ domains) with PODXL (via the C-terminal PDZ-binding motif DTHL); interaction is detected in glomerular epithelium cells. Binds PODXL. Interacts with SGK1 and KCNJ1/ROMK1. Interacts (via the PDZ domains) with SLC26A6. Detected in kidney glomeruli.

The protein localises to the endomembrane system. Its subcellular location is the nucleus. It is found in the apical cell membrane. Its function is as follows. Scaffold protein that connects plasma membrane proteins with members of the ezrin/moesin/radixin family and thereby helps to link them to the actin cytoskeleton and to regulate their surface expression. Necessary for cAMP-mediated phosphorylation and inhibition of SLC9A3. May also act as scaffold protein in the nucleus. This chain is Na(+)/H(+) exchange regulatory cofactor NHE-RF2 (NHERF2), found in Oryctolagus cuniculus (Rabbit).